Reading from the N-terminus, the 133-residue chain is Interferon alpha-inducible protein 27-like protein 2 (133 aa).

Helical transmembrane passes span 8–28, 51–71, and 73–93; these read AAIGGALAVAAVPAVLGAVGF, GGGVAAGSLVATLQSVGAAGL, and TSSNILLGSIGSAFGALLGGA. Residues 93 to 133 are disordered; it reads AKRASPSPPPGGPRPEGEQPGENVPQVEPPKSPLGPEKHEK.

Belongs to the IFI6/IFI27 family.

Its subcellular location is the mitochondrion membrane. Plays a role in the apoptotic process and has a pro-apoptotic activity. The protein is Interferon alpha-inducible protein 27-like protein 2 of Bos taurus (Bovine).